The primary structure comprises 186 residues: Probable nicotinate-nucleotide adenylyltransferase (186 aa).

The protein belongs to the NadD family.

The catalysed reaction is nicotinate beta-D-ribonucleotide + ATP + H(+) = deamido-NAD(+) + diphosphate. It participates in cofactor biosynthesis; NAD(+) biosynthesis; deamido-NAD(+) from nicotinate D-ribonucleotide: step 1/1. In terms of biological role, catalyzes the reversible adenylation of nicotinate mononucleotide (NaMN) to nicotinic acid adenine dinucleotide (NaAD). This Thermus thermophilus (strain ATCC BAA-163 / DSM 7039 / HB27) protein is Probable nicotinate-nucleotide adenylyltransferase.